The sequence spans 649 residues: V-type ATP synthase subunit I (649 aa).

Helical transmembrane passes span 312-332, 360-380, 455-475, 485-505, 520-540, 556-576, and 593-613; these read FLSF…GLIF, FMIL…FFGV, DNIL…LGML, IGWV…LQAV, GQVG…GGII, VFSD…GAMV, and VLII…GGVI.

Belongs to the V-ATPase 116 kDa subunit family.

It localises to the cell membrane. Functionally, produces ATP from ADP in the presence of a proton gradient across the membrane. This is V-type ATP synthase subunit I (atpI) from Chlamydia muridarum (strain MoPn / Nigg).